The chain runs to 159 residues: MRIVLQKVSHAGVTVTDEAIGELDTTFTEQTIAAGYVLLVGVSDADGTRQIDWLAHKISNLRVFEDEQGKMNLSIHDVGGSILSISQFTLFADTRKGNRPSFVRAGKPEHAERVWLEFNEALRAQGLQVKEGRFGAHMNVSLVNDGPVTILFDTEELGI.

A Gly-cisPro motif, important for rejection of L-amino acids motif is present at residues 146 to 147; that stretch reads GP.

The protein belongs to the DTD family. As to quaternary structure, homodimer.

It is found in the cytoplasm. The enzyme catalyses glycyl-tRNA(Ala) + H2O = tRNA(Ala) + glycine + H(+). The catalysed reaction is a D-aminoacyl-tRNA + H2O = a tRNA + a D-alpha-amino acid + H(+). An aminoacyl-tRNA editing enzyme that deacylates mischarged D-aminoacyl-tRNAs. Also deacylates mischarged glycyl-tRNA(Ala), protecting cells against glycine mischarging by AlaRS. Acts via tRNA-based rather than protein-based catalysis; rejects L-amino acids rather than detecting D-amino acids in the active site. By recycling D-aminoacyl-tRNA to D-amino acids and free tRNA molecules, this enzyme counteracts the toxicity associated with the formation of D-aminoacyl-tRNA entities in vivo and helps enforce protein L-homochirality. The polypeptide is D-aminoacyl-tRNA deacylase (Bifidobacterium animalis subsp. lactis (strain AD011)).